Here is a 188-residue protein sequence, read N- to C-terminus: GTP cyclohydrolase 1 (188 aa).

Residues cysteine 76, histidine 79, and cysteine 148 each contribute to the Zn(2+) site.

The protein belongs to the GTP cyclohydrolase I family. In terms of assembly, homomer.

The enzyme catalyses GTP + H2O = 7,8-dihydroneopterin 3'-triphosphate + formate + H(+). The protein operates within cofactor biosynthesis; 7,8-dihydroneopterin triphosphate biosynthesis; 7,8-dihydroneopterin triphosphate from GTP: step 1/1. This Pelotomaculum thermopropionicum (strain DSM 13744 / JCM 10971 / SI) protein is GTP cyclohydrolase 1.